A 45-amino-acid polypeptide reads, in one-letter code: COP9 signalosome complex subunit 4 (45 aa).

Belongs to the CSN4 family. Component of the CSN complex, probably composed of CSN1, CSN2, CSN3, CSN4, CSN5 (CSN5A or CSN5B), CSN6 (CSN6A or CSN6B), CSN7 and CSN8.

It localises to the cytoplasm. The protein resides in the nucleus. Component of the COP9 signalosome complex (CSN), a complex involved in various cellular and developmental processes such as photomorphogenesis and auxin and jasmonate responses. The CSN complex is an essential regulator of the ubiquitin (Ubl) conjugation pathway by mediating the deneddylation of the cullin subunits of SCF-type E3 ligase complexes, leading to decrease the Ubl ligase activity of SCF. It is involved in repression of photomorphogenesis in darkness by regulating the activity of COP1-containing Ubl ligase complexes. The sequence is that of COP9 signalosome complex subunit 4 (CSN4) from Brassica oleracea (Wild cabbage).